The chain runs to 272 residues: L-aspartate dehydrogenase (272 aa).

NAD(+)-binding residues include alanine 125 and asparagine 192. Residue histidine 222 is part of the active site.

The protein belongs to the L-aspartate dehydrogenase family.

The catalysed reaction is L-aspartate + NADP(+) + H2O = oxaloacetate + NH4(+) + NADPH + H(+). The enzyme catalyses L-aspartate + NAD(+) + H2O = oxaloacetate + NH4(+) + NADH + H(+). It participates in cofactor biosynthesis; NAD(+) biosynthesis; iminoaspartate from L-aspartate (dehydrogenase route): step 1/1. Specifically catalyzes the NAD or NADP-dependent dehydrogenation of L-aspartate to iminoaspartate. This chain is L-aspartate dehydrogenase, found in Nitrosopumilus maritimus (strain SCM1).